A 341-amino-acid polypeptide reads, in one-letter code: L-sulfolactate dehydrogenase (341 aa).

It belongs to the LDH2/MDH2 oxidoreductase family.

It localises to the cytoplasm. It carries out the reaction a (2S)-2-hydroxycarboxylate + NAD(+) = a 2-oxocarboxylate + NADH + H(+). It participates in cofactor biosynthesis; coenzyme M biosynthesis; sulfoacetaldehyde from phosphoenolpyruvate and sulfite: step 3/4. It functions in the pathway cofactor biosynthesis; 5,6,7,8-tetrahydromethanopterin biosynthesis. Its function is as follows. Catalyzes the reduction of sulfopyruvate to (R)-sulfolactate. Involved in the biosynthesis of both coenzyme M (with (R)-sulfolactate) and methanopterin (with alpha-ketoglutarate). This is L-sulfolactate dehydrogenase (comC) from Methanothermobacter thermautotrophicus (strain ATCC 29096 / DSM 1053 / JCM 10044 / NBRC 100330 / Delta H) (Methanobacterium thermoautotrophicum).